The following is a 589-amino-acid chain: Probable arginine--tRNA ligase, cytoplasmic (589 aa).

L-arginine-binding positions include 121–123 (SPN), His132, Tyr332, Asp336, and Gln360. A 'HIGH' region motif is present at residues 121–132 (SPNIAKPFHAGH). Residues 469–483 (DTGPYLQYAHARLCS) are interaction with tRNA.

It belongs to the class-I aminoacyl-tRNA synthetase family.

It is found in the cytoplasm. The protein resides in the cytosol. The catalysed reaction is tRNA(Arg) + L-arginine + ATP = L-arginyl-tRNA(Arg) + AMP + diphosphate. Functionally, forms part of a macromolecular complex that catalyzes the attachment of specific amino acids to cognate tRNAs during protein synthesis. In Dictyostelium discoideum (Social amoeba), this protein is Probable arginine--tRNA ligase, cytoplasmic (argS1).